Here is a 189-residue protein sequence, read N- to C-terminus: Movement protein p22 (189 aa).

It belongs to the tombusvirus/aureusvirus movement protein p22 family. As to quaternary structure, interacts with host protein HFI22. Phosphorylated.

It is found in the host membrane. Its function is as follows. Cell-to-cell movement. Displays RNA-binding activity. The polypeptide is Movement protein p22 (Capsicum annuum (Capsicum pepper)).